Here is a 219-residue protein sequence, read N- to C-terminus: Orotate phosphoribosyltransferase (219 aa).

Lys26 contributes to the 5-phospho-alpha-D-ribose 1-diphosphate binding site. Position 34–35 (34–35) interacts with orotate; that stretch reads FF. 5-phospho-alpha-D-ribose 1-diphosphate-binding positions include 72-73, Arg98, Lys99, Lys102, His104, and 124-132; these read YK and DDVITAGTA. Orotate is bound by residues Thr128 and Arg156.

Belongs to the purine/pyrimidine phosphoribosyltransferase family. PyrE subfamily. As to quaternary structure, homodimer. Mg(2+) is required as a cofactor.

It carries out the reaction orotidine 5'-phosphate + diphosphate = orotate + 5-phospho-alpha-D-ribose 1-diphosphate. Its pathway is pyrimidine metabolism; UMP biosynthesis via de novo pathway; UMP from orotate: step 1/2. Its function is as follows. Catalyzes the transfer of a ribosyl phosphate group from 5-phosphoribose 1-diphosphate to orotate, leading to the formation of orotidine monophosphate (OMP). This is Orotate phosphoribosyltransferase from Stenotrophomonas maltophilia (strain K279a).